Reading from the N-terminus, the 306-residue chain is Methionyl-tRNA formyltransferase (306 aa).

(6S)-5,6,7,8-tetrahydrofolate is bound at residue 110 to 113; it reads SLLP.

It belongs to the Fmt family.

The catalysed reaction is L-methionyl-tRNA(fMet) + (6R)-10-formyltetrahydrofolate = N-formyl-L-methionyl-tRNA(fMet) + (6S)-5,6,7,8-tetrahydrofolate + H(+). Its function is as follows. Attaches a formyl group to the free amino group of methionyl-tRNA(fMet). The formyl group appears to play a dual role in the initiator identity of N-formylmethionyl-tRNA by promoting its recognition by IF2 and preventing the misappropriation of this tRNA by the elongation apparatus. This Brucella anthropi (strain ATCC 49188 / DSM 6882 / CCUG 24695 / JCM 21032 / LMG 3331 / NBRC 15819 / NCTC 12168 / Alc 37) (Ochrobactrum anthropi) protein is Methionyl-tRNA formyltransferase.